The following is a 39-amino-acid chain: Photosystem II reaction center protein J (39 aa).

The helical transmembrane segment at 7 to 27 (IPLWLVATIGGIAVLTVLGLF) threads the bilayer.

It belongs to the PsbJ family. As to quaternary structure, PSII is composed of 1 copy each of membrane proteins PsbA, PsbB, PsbC, PsbD, PsbE, PsbF, PsbH, PsbI, PsbJ, PsbK, PsbL, PsbM, PsbT, PsbX, PsbY, PsbZ, Psb30/Ycf12, at least 3 peripheral proteins of the oxygen-evolving complex and a large number of cofactors. It forms dimeric complexes.

The protein localises to the plastid. Its subcellular location is the chloroplast thylakoid membrane. Functionally, one of the components of the core complex of photosystem II (PSII). PSII is a light-driven water:plastoquinone oxidoreductase that uses light energy to abstract electrons from H(2)O, generating O(2) and a proton gradient subsequently used for ATP formation. It consists of a core antenna complex that captures photons, and an electron transfer chain that converts photonic excitation into a charge separation. This chain is Photosystem II reaction center protein J, found in Cyanidioschyzon merolae (strain NIES-3377 / 10D) (Unicellular red alga).